Here is a 331-residue protein sequence, read N- to C-terminus: Ketol-acid reductoisomerase (NADP(+)) (331 aa).

The KARI N-terminal Rossmann domain occupies 1–181; the sequence is MKVYYEKDAN…GGSRSGVIET (181 aa). Residues 24–27, arginine 47, and 82–85 each bind NADP(+); these read YGSQ and DQVQ. Residue histidine 107 is part of the active site. Glycine 133 is a binding site for NADP(+). One can recognise a KARI C-terminal knotted domain in the interval 182–327; that stretch reads TFREETETDL…GELRGMMPWL (146 aa). 4 residues coordinate Mg(2+): aspartate 190, glutamate 194, glutamate 226, and glutamate 230. Residue serine 251 participates in substrate binding.

It belongs to the ketol-acid reductoisomerase family. It depends on Mg(2+) as a cofactor.

The catalysed reaction is (2R)-2,3-dihydroxy-3-methylbutanoate + NADP(+) = (2S)-2-acetolactate + NADPH + H(+). The enzyme catalyses (2R,3R)-2,3-dihydroxy-3-methylpentanoate + NADP(+) = (S)-2-ethyl-2-hydroxy-3-oxobutanoate + NADPH + H(+). It functions in the pathway amino-acid biosynthesis; L-isoleucine biosynthesis; L-isoleucine from 2-oxobutanoate: step 2/4. The protein operates within amino-acid biosynthesis; L-valine biosynthesis; L-valine from pyruvate: step 2/4. Its function is as follows. Involved in the biosynthesis of branched-chain amino acids (BCAA). Catalyzes an alkyl-migration followed by a ketol-acid reduction of (S)-2-acetolactate (S2AL) to yield (R)-2,3-dihydroxy-isovalerate. In the isomerase reaction, S2AL is rearranged via a Mg-dependent methyl migration to produce 3-hydroxy-3-methyl-2-ketobutyrate (HMKB). In the reductase reaction, this 2-ketoacid undergoes a metal-dependent reduction by NADPH to yield (R)-2,3-dihydroxy-isovalerate. This Nitratidesulfovibrio vulgaris (strain ATCC 29579 / DSM 644 / CCUG 34227 / NCIMB 8303 / VKM B-1760 / Hildenborough) (Desulfovibrio vulgaris) protein is Ketol-acid reductoisomerase (NADP(+)).